The primary structure comprises 199 residues: MSNYPKPINRLIEALSYLPGIGPKTAERLAFHIVSMDETKVNHLITALQDSRDKVFECSTCNNLTDKDPCTICQDESRDSNLICVVQDARDVTAIEKVQDFQGKYHVLQGVISPMEGIGPDDLNLKALMDRIQGEGITELVVATDPTVEGEATAMYLNKLVKPLGVRVTRLAYGLPMGGDLEYADEMTLQQAFEGRKEL.

Residues 58-73 (CSTCNNLTDKDPCTIC) form a C4-type zinc finger. The Toprim domain occupies 81–176 (NLICVVQDAR…RVTRLAYGLP (96 aa)).

The protein belongs to the RecR family.

May play a role in DNA repair. It seems to be involved in an RecBC-independent recombinational process of DNA repair. It may act with RecF and RecO. In Natranaerobius thermophilus (strain ATCC BAA-1301 / DSM 18059 / JW/NM-WN-LF), this protein is Recombination protein RecR.